The following is a 369-amino-acid chain: MAPCMLLLLLAAALAPTQTRAGPHSLRYFHTAVSRPGLGKPRFISVGYVDDTQFVRFDSDAENPRYEPRVRWMEQVEPEYWERNTQIAKGNEQIFRVNLRTALRYYNQSAGGSHTFQRMYGCEVGSDWRLLRGYEQYAYDGCDYIALNEDLKTWTAADMAALITKHKWEQAGDAERDRAYLEGTCVEWLRRYLQLGNATLPRTDSPKAHVTRHSRPEDKVTLRCWALGFYPADITLTWQLNGEELTQDMELVETRPAGDGTFQKWASVVVPLGKEQYYTCHVYHQGLPEPLTLRWEPPPSTVSNTVIIAVLVVLGAAIVTGAVVAFVMKMRRRNTGGKGGDYALAPGSQTSDLSLPDCKVMVHDPHSLA.

Residues 1-21 (MAPCMLLLLLAAALAPTQTRA) form the signal peptide. The alpha-1 stretch occupies residues 22–111 (GPHSLRYFHT…ALRYYNQSAG (90 aa)). Residues 22–305 (GPHSLRYFHT…EPPPSTVSNT (284 aa)) are Extracellular-facing. The N-linked (GlcNAc...) asparagine glycan is linked to Asn107. Positions 112 to 203 (GSHTFQRMYG…QLGNATLPRT (92 aa)) are alpha-2. An intrachain disulfide couples Cys122 to Cys185. Asn197 carries an N-linked (GlcNAc...) asparagine glycan. Residues 204–295 (DSPKAHVTRH…GLPEPLTLRW (92 aa)) form an alpha-3 region. Residues 206-294 (PKAHVTRHSR…QGLPEPLTLR (89 aa)) form the Ig-like C1-type domain. Cys224 and Cys280 are disulfide-bonded. The connecting peptide stretch occupies residues 296 to 305 (EPPPSTVSNT). A helical transmembrane segment spans residues 306 to 328 (VIIAVLVVLGAAIVTGAVVAFVM). The Cytoplasmic portion of the chain corresponds to 329-369 (KMRRRNTGGKGGDYALAPGSQTSDLSLPDCKVMVHDPHSLA). Ser351 and Ser354 each carry phosphoserine.

Belongs to the MHC class I family. In terms of assembly, heterodimer of an alpha chain and a beta chain (beta-2-microglobulin).

It localises to the membrane. Its function is as follows. Involved in the presentation of foreign antigens to the immune system. The protein is H-2 class I histocompatibility antigen, K-K alpha chain (H2-K1) of Mus musculus (Mouse).